The chain runs to 335 residues: Mitochondrial amidoxime reducing component 2 (335 aa).

Residues methionine 1–leucine 35 constitute a mitochondrion transit peptide. Residues lysine 59, lysine 138, and lysine 144 each participate in a glycyl lysine isopeptide (Lys-Gly) (interchain with G-Cter in ubiquitin) cross-link. Lysine 156 is subject to N6-acetyllysine; alternate. Residue lysine 156 forms a Glycyl lysine isopeptide (Lys-Gly) (interchain with G-Cter in ubiquitin); alternate linkage. Residues lysine 166, lysine 173, lysine 187, lysine 287, and lysine 294 each participate in a glycyl lysine isopeptide (Lys-Gly) (interchain with G-Cter in ubiquitin) cross-link. The MOSC domain maps to glycine 188–methionine 334.

In terms of assembly, component of a complex composed of cytochrome b5, NADH-cytochrome b5 reductase (CYB5R3) and MTARC2. Mo-molybdopterin serves as cofactor. Ubiquitinated by PRKN during mitophagy, leading to its degradation and enhancement of mitophagy. Deubiquitinated by USP30.

The protein localises to the mitochondrion outer membrane. It localises to the peroxisome. The enzyme catalyses N(omega)-hydroxy-L-arginine + 2 Fe(II)-[cytochrome b5] + 2 H(+) = L-arginine + 2 Fe(III)-[cytochrome b5] + H2O. Functionally, catalyzes the reduction of N-oxygenated molecules, acting as a counterpart of cytochrome P450 and flavin-containing monooxygenases in metabolic cycles. As a component of prodrug-converting system, reduces a multitude of N-hydroxylated prodrugs particularly amidoximes, leading to increased drug bioavailability. May be involved in mitochondrial N(omega)-hydroxy-L-arginine (NOHA) reduction, regulating endogenous nitric oxide levels and biosynthesis. Postulated to cleave the N-OH bond of N-hydroxylated substrates in concert with electron transfer from NADH to cytochrome b5 reductase then to cytochrome b5, the ultimate electron donor that primes the active site for substrate reduction. In Homo sapiens (Human), this protein is Mitochondrial amidoxime reducing component 2.